Consider the following 201-residue polypeptide: dTTP/UTP pyrophosphatase (201 aa).

The Proton acceptor role is filled by Asp81.

The protein belongs to the Maf family. YhdE subfamily. The cofactor is a divalent metal cation.

The protein localises to the cytoplasm. It carries out the reaction dTTP + H2O = dTMP + diphosphate + H(+). The catalysed reaction is UTP + H2O = UMP + diphosphate + H(+). Functionally, nucleoside triphosphate pyrophosphatase that hydrolyzes dTTP and UTP. May have a dual role in cell division arrest and in preventing the incorporation of modified nucleotides into cellular nucleic acids. The protein is dTTP/UTP pyrophosphatase of Dechloromonas aromatica (strain RCB).